A 427-amino-acid polypeptide reads, in one-letter code: Glutamate-1-semialdehyde 2,1-aminomutase (427 aa).

The residue at position 265 (K265) is an N6-(pyridoxal phosphate)lysine.

The protein belongs to the class-III pyridoxal-phosphate-dependent aminotransferase family. HemL subfamily. In terms of assembly, homodimer. The cofactor is pyridoxal 5'-phosphate.

It is found in the cytoplasm. It catalyses the reaction (S)-4-amino-5-oxopentanoate = 5-aminolevulinate. Its pathway is porphyrin-containing compound metabolism; protoporphyrin-IX biosynthesis; 5-aminolevulinate from L-glutamyl-tRNA(Glu): step 2/2. This is Glutamate-1-semialdehyde 2,1-aminomutase from Bordetella bronchiseptica (strain ATCC BAA-588 / NCTC 13252 / RB50) (Alcaligenes bronchisepticus).